The sequence spans 134 residues: Alkaline proteinase inhibitor (134 aa).

The signal sequence occupies residues 1–26 (MVFAAWYLKFAGFVALIFSIIGGSMA). Cys50 and Cys73 are joined by a disulfide.

This sequence belongs to the protease inhibitor I38 family.

It is found in the periplasm. Inhibitor of the alkaline protease. The protein is Alkaline proteinase inhibitor (inh) of Photorhabdus laumondii subsp. laumondii (strain DSM 15139 / CIP 105565 / TT01) (Photorhabdus luminescens subsp. laumondii).